We begin with the raw amino-acid sequence, 246 residues long: UDP-2,3-diacylglucosamine hydrolase (246 aa).

Positions 8, 10, 41, 79, and 114 each coordinate Mn(2+). Residue 79–80 coordinates substrate; sequence NR. 5 residues coordinate substrate: D122, S160, N164, K167, and H195. Residues H195 and H197 each coordinate Mn(2+).

It belongs to the LpxH family. Mn(2+) is required as a cofactor.

The protein localises to the cell inner membrane. The enzyme catalyses UDP-2-N,3-O-bis[(3R)-3-hydroxytetradecanoyl]-alpha-D-glucosamine + H2O = 2-N,3-O-bis[(3R)-3-hydroxytetradecanoyl]-alpha-D-glucosaminyl 1-phosphate + UMP + 2 H(+). Its pathway is glycolipid biosynthesis; lipid IV(A) biosynthesis; lipid IV(A) from (3R)-3-hydroxytetradecanoyl-[acyl-carrier-protein] and UDP-N-acetyl-alpha-D-glucosamine: step 4/6. Functionally, hydrolyzes the pyrophosphate bond of UDP-2,3-diacylglucosamine to yield 2,3-diacylglucosamine 1-phosphate (lipid X) and UMP by catalyzing the attack of water at the alpha-P atom. Involved in the biosynthesis of lipid A, a phosphorylated glycolipid that anchors the lipopolysaccharide to the outer membrane of the cell. The polypeptide is UDP-2,3-diacylglucosamine hydrolase (Chromohalobacter salexigens (strain ATCC BAA-138 / DSM 3043 / CIP 106854 / NCIMB 13768 / 1H11)).